Consider the following 225-residue polypeptide: Transcriptional activator protein CUP2 (225 aa).

A DNA-binding region (copper-fist) is located at residues 1–40 (MVVINGVKYACETCIRGHRAAQCTHTDGPLQMIRRKGRPS). The binds copper and DNA stretch occupies residues 1 to 108 (MVVINGVKYA…KSKGGSCHRR (108 aa)). Zn(2+) is bound by residues Cys11, Cys14, Cys23, and His25. The segment at 109–225 (ANDEAAHVNG…QVSSHNSHSQ (117 aa)) is required for transcriptional activation.

The protein localises to the nucleus. Functionally, trans-acting regulatory protein that activates transcription of the CUP1 gene (metallothionein) in response to copper ions. Binds to the CUP1 UAS sequence 5'-GCTTCTTTTCCGCTGA-3'. Binds DNA only in presence of copper or silver. Copper seems to alter the conformation of the protein. This chain is Transcriptional activator protein CUP2 (CUP2), found in Saccharomyces cerevisiae (strain ATCC 204508 / S288c) (Baker's yeast).